Consider the following 147-residue polypeptide: UPF0735 ACT domain-containing protein GTNG_2535 (147 aa).

The ACT domain maps to 69–144 (TLFFHLEDRS…FVEKVEIVGS (76 aa)).

The protein belongs to the UPF0735 family.

In Geobacillus thermodenitrificans (strain NG80-2), this protein is UPF0735 ACT domain-containing protein GTNG_2535.